The following is a 394-amino-acid chain: Formate-dependent phosphoribosylglycinamide formyltransferase (394 aa).

Residues 21–22 (EL) and E81 contribute to the N(1)-(5-phospho-beta-D-ribosyl)glycinamide site. Residues R113, K154, 159 to 164 (SSGKGQ), 194 to 197 (EEFI), and E202 each bind ATP. Residues 118–307 (RLAAEELGLP…QFELHVRAIL (190 aa)) enclose the ATP-grasp domain. 2 residues coordinate Mg(2+): E266 and E278. N(1)-(5-phospho-beta-D-ribosyl)glycinamide is bound by residues D285, K355, and 362–363 (RR).

The protein belongs to the PurK/PurT family. As to quaternary structure, homodimer.

The catalysed reaction is N(1)-(5-phospho-beta-D-ribosyl)glycinamide + formate + ATP = N(2)-formyl-N(1)-(5-phospho-beta-D-ribosyl)glycinamide + ADP + phosphate + H(+). Its pathway is purine metabolism; IMP biosynthesis via de novo pathway; N(2)-formyl-N(1)-(5-phospho-D-ribosyl)glycinamide from N(1)-(5-phospho-D-ribosyl)glycinamide (formate route): step 1/1. Functionally, involved in the de novo purine biosynthesis. Catalyzes the transfer of formate to 5-phospho-ribosyl-glycinamide (GAR), producing 5-phospho-ribosyl-N-formylglycinamide (FGAR). Formate is provided by PurU via hydrolysis of 10-formyl-tetrahydrofolate. This chain is Formate-dependent phosphoribosylglycinamide formyltransferase, found in Pelobacter propionicus (strain DSM 2379 / NBRC 103807 / OttBd1).